The primary structure comprises 747 residues: Ion-translocating oxidoreductase complex subunit C (747 aa).

4Fe-4S ferredoxin-type domains lie at M368–Y397 and K407–Y436. The [4Fe-4S] cluster site is built by C377, C380, C383, C387, C416, C419, C422, and C426. The disordered stretch occupies residues V538 to D564.

Belongs to the 4Fe4S bacterial-type ferredoxin family. RnfC subfamily. The complex is composed of six subunits: RnfA, RnfB, RnfC, RnfD, RnfE and RnfG. The cofactor is [4Fe-4S] cluster.

The protein localises to the cell inner membrane. Part of a membrane-bound complex that couples electron transfer with translocation of ions across the membrane. The protein is Ion-translocating oxidoreductase complex subunit C of Pectobacterium carotovorum subsp. carotovorum (strain PC1).